The chain runs to 245 residues: tRNA1(Val) (adenine(37)-N6)-methyltransferase (245 aa).

Belongs to the methyltransferase superfamily. tRNA (adenine-N(6)-)-methyltransferase family.

The protein resides in the cytoplasm. The enzyme catalyses adenosine(37) in tRNA1(Val) + S-adenosyl-L-methionine = N(6)-methyladenosine(37) in tRNA1(Val) + S-adenosyl-L-homocysteine + H(+). Functionally, specifically methylates the adenine in position 37 of tRNA(1)(Val) (anticodon cmo5UAC). The polypeptide is tRNA1(Val) (adenine(37)-N6)-methyltransferase (Escherichia coli O139:H28 (strain E24377A / ETEC)).